A 429-amino-acid polypeptide reads, in one-letter code: Enolase (429 aa).

(2R)-2-phosphoglycerate is bound at residue Gln167. The active-site Proton donor is the Glu209. Positions 246, 289, and 316 each coordinate Mg(2+). The (2R)-2-phosphoglycerate site is built by Lys341, Arg370, Ser371, and Lys392. Residue Lys341 is the Proton acceptor of the active site.

Belongs to the enolase family. In terms of assembly, component of the RNA degradosome, a multiprotein complex involved in RNA processing and mRNA degradation. Mg(2+) serves as cofactor.

It is found in the cytoplasm. The protein localises to the secreted. It localises to the cell surface. It carries out the reaction (2R)-2-phosphoglycerate = phosphoenolpyruvate + H2O. It functions in the pathway carbohydrate degradation; glycolysis; pyruvate from D-glyceraldehyde 3-phosphate: step 4/5. Functionally, catalyzes the reversible conversion of 2-phosphoglycerate (2-PG) into phosphoenolpyruvate (PEP). It is essential for the degradation of carbohydrates via glycolysis. This is Enolase from Pseudomonas putida (strain ATCC 47054 / DSM 6125 / CFBP 8728 / NCIMB 11950 / KT2440).